The chain runs to 360 residues: Phospho-N-acetylmuramoyl-pentapeptide-transferase (360 aa).

The next 10 membrane-spanning stretches (helical) occupy residues 21–41, 73–93, 94–114, 145–165, 168–188, 199–219, 236–256, 263–283, 288–308, and 339–359; these read YLTL…LWLG, TMGG…WGDL, TNHY…IGWV, AVTL…VPLF, VVVP…VGSS, GLAI…AYAS, AGEL…FLWF, VFMG…VAVI, IVLF…MLQV, and IVRF…TLKI.

The protein belongs to the glycosyltransferase 4 family. MraY subfamily. Mg(2+) is required as a cofactor.

It localises to the cell inner membrane. It carries out the reaction UDP-N-acetyl-alpha-D-muramoyl-L-alanyl-gamma-D-glutamyl-meso-2,6-diaminopimeloyl-D-alanyl-D-alanine + di-trans,octa-cis-undecaprenyl phosphate = di-trans,octa-cis-undecaprenyl diphospho-N-acetyl-alpha-D-muramoyl-L-alanyl-D-glutamyl-meso-2,6-diaminopimeloyl-D-alanyl-D-alanine + UMP. It functions in the pathway cell wall biogenesis; peptidoglycan biosynthesis. Functionally, catalyzes the initial step of the lipid cycle reactions in the biosynthesis of the cell wall peptidoglycan: transfers peptidoglycan precursor phospho-MurNAc-pentapeptide from UDP-MurNAc-pentapeptide onto the lipid carrier undecaprenyl phosphate, yielding undecaprenyl-pyrophosphoryl-MurNAc-pentapeptide, known as lipid I. The chain is Phospho-N-acetylmuramoyl-pentapeptide-transferase from Chromohalobacter salexigens (strain ATCC BAA-138 / DSM 3043 / CIP 106854 / NCIMB 13768 / 1H11).